The primary structure comprises 565 residues: Nephronectin (565 aa).

The signal sequence occupies residues Met1–Ala19. One can recognise an EGF-like 1 domain in the interval Ser52–Asn87. Cystine bridges form between Cys56/Cys69, Cys60/Cys75, Cys77/Cys86, Cys93/Cys104, Cys100/Cys113, and Cys115/Cys127. In terms of domain architecture, EGF-like 2; calcium-binding spans Asp89–Ser128. The 37-residue stretch at Thr132–Val168 folds into the EGF-like 3 domain. The EGF-like 4; calcium-binding domain maps to Asp169–His213. 6 disulfides stabilise this stretch: Cys173–Cys186, Cys180–Cys195, Cys197–Cys212, Cys218–Cys231, Cys225–Cys240, and Cys242–Cys253. The EGF-like 5; calcium-binding domain occupies Asp214–Val254. Positions Tyr301–Arg389 are disordered. A compositionally biased stretch (low complexity) spans Pro304–Thr316. Pro residues predominate over residues Arg317–Pro347. Residues Arg382–Asp384 carry the Integrin interaction motif. The MAM domain occupies His420–Glu563.

This sequence belongs to the nephronectin family. Homodimer and homotrimer. As to expression, expressed in kidney and lung and to a lower extent in brain, pregnant uterus, placenta, thyroid gland and blood vessels.

It is found in the secreted. The protein resides in the extracellular space. Its subcellular location is the extracellular matrix. Its function is as follows. Functional ligand of integrin alpha-8/beta-1 in kidney development. Regulates the expression of GDNF with integrin alpha-8/beta-1 which is essential for kidney development. May also play a role in the development and function of various tissues, regulating cell adhesion, spreading and survival through the binding of several integrins. This Homo sapiens (Human) protein is Nephronectin (NPNT).